Consider the following 487-residue polypeptide: Aspyridones efflux protein apdF (487 aa).

Basic and acidic residues predominate over residues 1–21 (MSSVRESSKDESIVHPPKAPE). Positions 1–25 (MSSVRESSKDESIVHPPKAPESEPF) are disordered. A helical transmembrane segment spans residues 35 to 55 (VALGAGGVLFCTFGYVNAFGV). Asn-67 carries an N-linked (GlcNAc...) asparagine glycan. The next 8 membrane-spanning stretches (helical) occupy residues 75–95 (WIGS…GPLF), 99–119 (GAKV…MTSL), 126–146 (FFLA…APAL), 159–179 (AAMG…PIAL), 191–211 (WAVR…VLGI), 234–254 (VATL…FFYL), 262–282 (GMST…SFFG), and 293–313 (IGPY…TFCW). Asn-319 carries an N-linked (GlcNAc...) asparagine glycan. The next 3 helical transmembrane spans lie at 322 to 342 (IIVF…ITPA), 354 to 374 (IGTY…IGPP), and 385 to 405 (GFLQ…VLAF).

The protein belongs to the major facilitator superfamily. Monocarboxylate porter (TC 2.A.1.13) family.

It is found in the cell membrane. In terms of biological role, efflux pump that may be involved in the secretion of aspyridones. The protein is Aspyridones efflux protein apdF of Emericella nidulans (strain FGSC A4 / ATCC 38163 / CBS 112.46 / NRRL 194 / M139) (Aspergillus nidulans).